The primary structure comprises 312 residues: 2,3-dihydroxyphenylpropionate/2,3-dihydroxicinnamic acid 1,2-dioxygenase (312 aa).

Histidine 115 acts as the Proton donor in catalysis. Histidine 179 acts as the Proton acceptor in catalysis.

It belongs to the LigB/MhpB extradiol dioxygenase family. Homotetramer. Requires Fe(2+) as cofactor.

The catalysed reaction is 3-(2,3-dihydroxyphenyl)propanoate + O2 = (2Z,4E)-2-hydroxy-6-oxonona-2,4-dienedioate + H(+). It carries out the reaction (2E)-3-(2,3-dihydroxyphenyl)prop-2-enoate + O2 = (2Z,4E,7E)-2-hydroxy-6-oxonona-2,4,7-trienedioate + H(+). It functions in the pathway aromatic compound metabolism; 3-phenylpropanoate degradation. In terms of biological role, catalyzes the non-heme iron(II)-dependent oxidative cleavage of 2,3-dihydroxyphenylpropionic acid and 2,3-dihydroxicinnamic acid into 2-hydroxy-6-ketononadienedioate and 2-hydroxy-6-ketononatrienedioate, respectively. This is 2,3-dihydroxyphenylpropionate/2,3-dihydroxicinnamic acid 1,2-dioxygenase from Mycolicibacterium paratuberculosis (strain ATCC BAA-968 / K-10) (Mycobacterium paratuberculosis).